The sequence spans 172 residues: Macro domain-containing protein CT2219 (172 aa).

Positions 1–172 (MPDNVLIHAI…DVYQKALAAG (172 aa)) constitute a Macro domain.

The protein belongs to the MacroD-type family.

This Chlorobaculum tepidum (strain ATCC 49652 / DSM 12025 / NBRC 103806 / TLS) (Chlorobium tepidum) protein is Macro domain-containing protein CT2219.